The chain runs to 76 residues: ATP synthase subunit 9, mitochondrial (76 aa).

2 helical membrane passes run 11–31 (IGAG…GIVF) and 53–73 (ILGF…AFLI).

The protein belongs to the ATPase C chain family. F-type ATPases have 2 components, CF(1) - the catalytic core - and CF(0) - the membrane proton channel. CF(1) has five subunits: alpha(3), beta(3), gamma(1), delta(1), epsilon(1). CF(0) has three main subunits: a, b and c.

The protein resides in the mitochondrion membrane. This protein is one of the chains of the nonenzymatic membrane component (F0) of mitochondrial ATPase. This Chondrus crispus (Carrageen Irish moss) protein is ATP synthase subunit 9, mitochondrial (ATP9).